Consider the following 414-residue polypeptide: Esterase FrsA (414 aa).

This sequence belongs to the FrsA family.

It carries out the reaction a carboxylic ester + H2O = an alcohol + a carboxylate + H(+). Its function is as follows. Catalyzes the hydrolysis of esters. This Enterobacter sp. (strain 638) protein is Esterase FrsA.